A 566-amino-acid chain; its full sequence is Urease subunit beta (566 aa).

Residues 129-566 (GGIDTHIHFI…VPMARRYFMF (438 aa)) enclose the Urease domain. Residues H134, H136, and K217 each contribute to the Ni(2+) site. An N6-carboxylysine modification is found at K217. H219 is a substrate binding site. Residues H246 and H272 each contribute to the Ni(2+) site. H320 serves as the catalytic Proton donor. Residue D360 participates in Ni(2+) binding.

Belongs to the metallo-dependent hydrolases superfamily. Urease alpha subunit family. In terms of assembly, heterohexamer of 3 UreA (alpha) and 3 UreB (beta) subunits. It depends on Ni cation as a cofactor. Post-translationally, carboxylation allows a single lysine to coordinate two nickel ions.

The protein resides in the cytoplasm. The enzyme catalyses urea + 2 H2O + H(+) = hydrogencarbonate + 2 NH4(+). It functions in the pathway nitrogen metabolism; urea degradation; CO(2) and NH(3) from urea (urease route): step 1/1. This Aliarcobacter butzleri (strain RM4018) (Arcobacter butzleri) protein is Urease subunit beta.